The sequence spans 81 residues: Arminin 2a (81 aa).

The N-terminal stretch at 1–18 is a signal peptide; it reads MKTVFAILFLAFIALTYA. Residues 19–57 constitute a propeptide that is removed on maturation; sequence RSYEDVKEEIKNEVVKEILEDLEEESDELDDKSKEINDA. Residue Ala78 is modified to Alanine amide.

The protein belongs to the arminin family. In terms of tissue distribution, expressed in entodermal epithelium along the body column.

Its subcellular location is the secreted. It localises to the target cell membrane. In terms of biological role, antimicrobial peptide with a broad-spectrum antimicrobial activity. Keeps its antibacterial activity under a wide range of salt concentrations that mimic physiological conditions of human blood, which is surprising, since Hydra is an obligate freshwater animal with nearly no salt tolerance. Does not affect red blood cells. In Hydra vulgaris (Hydra), this protein is Arminin 2a.